Reading from the N-terminus, the 380-residue chain is Cytochrome b (380 aa).

4 helical membrane-spanning segments follow: residues 33-53 (FGSLLGLCLLTQILTGLFLAM), 77-98 (WLIRNFHANGASFFFICLYLHI), 113-133 (WNVGVVLFLLVMMTAFVGYVL), and 178-198 (FFAFHFLFPFIIAAMTILHFL). Heme b contacts are provided by His-83 and His-97. Residues His-182 and His-196 each contribute to the heme b site. Residue His-201 coordinates a ubiquinone. A run of 4 helical transmembrane segments spans residues 226-246 (YKDLLGFVVMLLALSTLSLFS), 288-308 (LGGVLALLSSILILMLVPILH), 320-340 (LTQILFWVLVADVAILTWIGG), and 347-367 (FIIVGQVASVLYFALFLVIMP).

It belongs to the cytochrome b family. The cytochrome bc1 complex contains 3 respiratory subunits (MT-CYB, CYC1 and UQCRFS1), 2 core proteins (UQCRC1 and UQCRC2) and probably 6 low-molecular weight proteins. The cofactor is heme b.

The protein resides in the mitochondrion inner membrane. Component of the ubiquinol-cytochrome c reductase complex (complex III or cytochrome b-c1 complex) that is part of the mitochondrial respiratory chain. The b-c1 complex mediates electron transfer from ubiquinol to cytochrome c. Contributes to the generation of a proton gradient across the mitochondrial membrane that is then used for ATP synthesis. The polypeptide is Cytochrome b (mt-cyb) (Zeus faber (John Dory)).